The primary structure comprises 246 residues: UDP-N-acetyl-D-mannosaminuronic acid transferase (246 aa).

The protein belongs to the glycosyltransferase 26 family.

It carries out the reaction UDP-N-acetyl-alpha-D-mannosaminouronate + N-acetyl-alpha-D-glucosaminyl-di-trans,octa-cis-undecaprenyl diphosphate = beta-D-ManNAcA-(1-&gt;4)-alpha-D-GlcNAc-di-trans,octa-cis-undecaprenyl diphosphate + UDP + H(+). Its pathway is bacterial outer membrane biogenesis; enterobacterial common antigen biosynthesis. Functionally, catalyzes the synthesis of Und-PP-GlcNAc-ManNAcA (Lipid II), the second lipid-linked intermediate involved in enterobacterial common antigen (ECA) synthesis. The polypeptide is UDP-N-acetyl-D-mannosaminuronic acid transferase (Escherichia coli O1:K1 / APEC).